The primary structure comprises 521 residues: MAP kinase-activated protein kinase mak-1 (521 aa).

Positions 1-12 are enriched in acidic residues; sequence MMFEYEEDEDPM. The disordered stretch occupies residues 1–36; it reads MMFEYEEDEDPMEQQKHEEFKHHSTDHSGSPQENPF. Over residues 13 to 26 the composition is skewed to basic and acidic residues; the sequence is EQQKHEEFKHHSTD. The Protein kinase domain maps to 144–405; it reads TISAEIIGIG…IHELMATPLV (262 aa). Residues 150 to 158 and lysine 173 each bind ATP; that span reads IGIGESGKV. Residue aspartate 266 is the Proton acceptor of the active site.

Belongs to the protein kinase superfamily. CAMK Ser/Thr protein kinase family. May interact (via protein kinase domain) with unc-22 (via protein kinase and CRD domains). Mg(2+) is required as a cofactor. Post-translationally, autophosphorylated in vitro. Expressed in body wall muscles (at protein level). Expressed in intestine.

It is found in the cytoplasm. Its subcellular location is the myofibril. The protein resides in the sarcomere. It localises to the a band. It catalyses the reaction L-seryl-[protein] + ATP = O-phospho-L-seryl-[protein] + ADP + H(+). It carries out the reaction L-threonyl-[protein] + ATP = O-phospho-L-threonyl-[protein] + ADP + H(+). Serine/threonine-protein kinase which may play a role in body wall muscle contraction. May phosphorylate unc-22/twitchin. This chain is MAP kinase-activated protein kinase mak-1, found in Caenorhabditis elegans.